Reading from the N-terminus, the 361-residue chain is Isocitrate dehydrogenase [NAD] subunit 1, mitochondrial (361 aa).

The N-terminal 12 residues, 1–12, are a transit peptide targeting the mitochondrion; that stretch reads MLRQGIAAQKKS. Residues Arg110, Arg141, and Asp229 each contribute to the substrate site. Asp229 provides a ligand contact to Mg(2+).

Belongs to the isocitrate and isopropylmalate dehydrogenases family. As to quaternary structure, octamer of two non-identical subunits IDH1 and IDH2. Requires Mg(2+) as cofactor. Mn(2+) is required as a cofactor.

Its subcellular location is the mitochondrion. It carries out the reaction D-threo-isocitrate + NAD(+) = 2-oxoglutarate + CO2 + NADH. Functionally, performs an essential role in the oxidative function of the citric acid cycle. This chain is Isocitrate dehydrogenase [NAD] subunit 1, mitochondrial (IDH1), found in Kluyveromyces lactis (strain ATCC 8585 / CBS 2359 / DSM 70799 / NBRC 1267 / NRRL Y-1140 / WM37) (Yeast).